A 44-amino-acid chain; its full sequence is Alpha-amylase inhibitor WDAI-3 (44 aa).

A disulfide bond links Cys20 and Cys41.

The protein belongs to the protease inhibitor I6 (cereal trypsin/alpha-amylase inhibitor) family. Homodimer. Post-translationally, the disulfide bonds are essential for the inhibitor activity. Endosperm.

It is found in the secreted. Alpha-amylase inhibitor. The polypeptide is Alpha-amylase inhibitor WDAI-3 (IHA-B1-2) (Triticum aestivum (Wheat)).